A 456-amino-acid polypeptide reads, in one-letter code: Gamma-aminobutyric acid receptor subunit alpha-1 (456 aa).

An N-terminal signal peptide occupies residues 1–27 (MRKSPGLSDYLWAWILLLSTLTGRSYG). Over 28 to 253 (QPSLQDELKD…FHLKRKIGYF (226 aa)) the chain is Extracellular. N38 carries an N-linked (GlcNAc...) asparagine glycan. Residue R94 coordinates 4-aminobutanoate. N-linked (GlcNAc...) asparagine glycosylation is present at N138. T157 serves as a coordination point for 4-aminobutanoate. The cysteines at positions 166 and 180 are disulfide-linked. A helical transmembrane segment spans residues 254-274 (VIQTYLPCIMTVILSQVSFWL). The Cytoplasmic portion of the chain corresponds to 275–279 (NRESV). Residues 280–301 (PARTVFGVTTVLTMTTLSISAR) traverse the membrane as a helical segment. Over 302–311 (NSLPKVAYAT) the chain is Extracellular. The helical transmembrane segment at 312-333 (AMDWFIAVCYAFVFSALIEFAT) threads the bilayer. Residues 334 to 421 (VNYFTKRGYA…TFNSVSKIDR (88 aa)) lie on the Cytoplasmic side of the membrane. The chain crosses the membrane as a helical span at residues 422–441 (LSRIAFPLLFGIFNLVYWAT). Residues 442–456 (YLNREPQLKAPTPHQ) lie on the Extracellular side of the membrane.

Belongs to the ligand-gated ion channel (TC 1.A.9) family. Gamma-aminobutyric acid receptor (TC 1.A.9.5) subfamily. GABRA1 sub-subfamily. Heteropentamer, formed by a combination of alpha (GABRA1-6), beta (GABRB1-3), gamma (GABRG1-3), delta (GABRD), epsilon (GABRE), rho (GABRR1-3), pi (GABRP) and theta (GABRQ) subunits, each subunit exhibiting distinct physiological and pharmacological properties. Interacts with UBQLN1. Interacts with TRAK1. Interacts with KIF21B. Identified in a complex of 720 kDa composed of LHFPL4, NLGN2, GABRA1, GABRB2, GABRG2 and GABRB3. Interacts with LHFPL4. Interacts with NLGN2. Interacts with SHISA7; interaction leads to the regulation of GABA(A) receptor trafficking, channel deactivation kinetics and pharmacology.

The protein localises to the postsynaptic cell membrane. It localises to the cell membrane. It is found in the cytoplasmic vesicle membrane. It carries out the reaction chloride(in) = chloride(out). Allosterically activated by benzodiazepines, the neuroanesthetic alphaxalone and pentobarbital. Inhibited by the antagonist bicuculline. Potentiated by histamine. Alpha subunit of the heteropentameric ligand-gated chloride channel gated by gamma-aminobutyric acid (GABA), a major inhibitory neurotransmitter in the brain. GABA-gated chloride channels, also named GABA(A) receptors (GABAAR), consist of five subunits arranged around a central pore and contain GABA active binding site(s) located at the alpha and beta subunit interface(s). When activated by GABA, GABAARs selectively allow the flow of chloride anions across the cell membrane down their electrochemical gradient. Alpha-1/GABRA1-containing GABAARs are largely synaptic. Chloride influx into the postsynaptic neuron following GABAAR opening decreases the neuron ability to generate a new action potential, thereby reducing nerve transmission. GABAARs containing alpha-1 and beta-2 or -3 subunits exhibit synaptogenic activity; the gamma-2 subunit being necessary but not sufficient to induce rapid synaptic contacts formation. GABAARs function also as histamine receptor where histamine binds at the interface of two neighboring beta subunits and potentiates GABA response. GABAARs containing alpha, beta and epsilon subunits also permit spontaneous chloride channel activity while preserving the structural information required for GABA-gated openings. Alpha-1-mediated plasticity in the orbitofrontal cortex regulates context-dependent action selection. Together with rho subunits, may also control neuronal and glial GABAergic transmission in the cerebellum. The protein is Gamma-aminobutyric acid receptor subunit alpha-1 (GABRA1) of Macaca fascicularis (Crab-eating macaque).